A 132-amino-acid polypeptide reads, in one-letter code: uncharacterized protein (132 aa).

Positions 45-115 (VHMEKHKLKI…VVIVTTAEGK (71 aa)) constitute a BIG2 domain.

To B.anthracis BA1245.

This is an uncharacterized protein from Bacillus cereus (strain ATCC 14579 / DSM 31 / CCUG 7414 / JCM 2152 / NBRC 15305 / NCIMB 9373 / NCTC 2599 / NRRL B-3711).